The following is a 236-amino-acid chain: uncharacterized protein (236 aa).

3 residues coordinate NADP(+): Asp22, Asn49, and Lys82. Residues Ser100 and Tyr114 each act as proton donor in the active site. NADP(+) contacts are provided by Tyr114 and Lys118. Lys118 functions as the Lowers pKa of active site Tyr in the catalytic mechanism.

It belongs to the short-chain dehydrogenases/reductases (SDR) family.

It is found in the cytoplasm. Its subcellular location is the nucleus. This is an uncharacterized protein from Schizosaccharomyces pombe (strain 972 / ATCC 24843) (Fission yeast).